Reading from the N-terminus, the 212-residue chain is MTKMLVLYYSSYGHIEAMAKAVANGAKQAGATVALKRVPELVPEAVARSSGYRLGQEAPIATVAELADYDAIVIGTPTRFGNMASQMKNFLDQTGGLWAENKLVGKVGSVFTSTGSQHGGQESTILSTHVVMLHLGMVIVGLPYSFKGQMRMDEITGGSPYGASTLAEDENHRDRSPSANELDGARFQGRHVAEVAAAMQLGRSHLQPELVR.

The region spanning 4–192 is the Flavodoxin-like domain; it reads MLVLYYSSYG…DGARFQGRHV (189 aa). FMN-binding positions include 10 to 15 and 78 to 80; these read SSYGHI and TRF. Tyr-12 is a binding site for NAD(+). Trp-98 lines the substrate pocket. Residues 113–119 and His-134 contribute to the FMN site; that span reads STGSQHG. Positions 161-182 are disordered; it reads YGASTLAEDENHRDRSPSANEL.

Belongs to the WrbA family. FMN is required as a cofactor.

It carries out the reaction a quinone + NADH + H(+) = a quinol + NAD(+). It catalyses the reaction a quinone + NADPH + H(+) = a quinol + NADP(+). In Rhizobium meliloti (strain 1021) (Ensifer meliloti), this protein is NAD(P)H dehydrogenase (quinone) 3.